The sequence spans 101 residues: Small ribosomal subunit protein uS14 (101 aa).

This sequence belongs to the universal ribosomal protein uS14 family. As to quaternary structure, part of the 30S ribosomal subunit. Contacts proteins S3 and S10.

Functionally, binds 16S rRNA, required for the assembly of 30S particles and may also be responsible for determining the conformation of the 16S rRNA at the A site. The sequence is that of Small ribosomal subunit protein uS14 from Orientia tsutsugamushi (strain Ikeda) (Rickettsia tsutsugamushi).